The primary structure comprises 140 residues: Anti-sigma F factor (140 aa).

It belongs to the anti-sigma-factor family.

It catalyses the reaction L-seryl-[protein] + ATP = O-phospho-L-seryl-[protein] + ADP + H(+). It carries out the reaction L-threonyl-[protein] + ATP = O-phospho-L-threonyl-[protein] + ADP + H(+). Its function is as follows. Binds to sigma F and blocks its ability to form an RNA polymerase holoenzyme (E-sigma F). Phosphorylates SpoIIAA on a serine residue. This phosphorylation may enable SpoIIAA to act as an anti-anti-sigma factor that counteracts SpoIIAB and thus releases sigma F from inhibition. In Clostridium perfringens (strain SM101 / Type A), this protein is Anti-sigma F factor.